The sequence spans 1188 residues: MAGHEVRYGKHRTRRSFSRIKEVLDLPNLIEIQTDSFQDFLDHGLKEVFEDVLPISNFTNTMELEFVGYEIREPKYTLEEARIHDASYSAPIFVTFRLINKETGEIKTQEVFFGDFPIMTEMGTFIINGGERIIVSQLVRSPGVYFNDKVDKNGKVGYGSTVIPNRGAWLELETDSKDIAYTRIDRTRKIPFTTLVRALGFSGDDEILDIFGDSDLVRNTIEKDIHKNPMDSRTDEALKEIYERLRPGEPKTAESSRSLLEARFFDPHRYDLAAVGRYKINKKLSVKTRLLNQTIAEPLVDAETGEILVEAGTVMTRSVIDSIAEQLDNGLNKITYIPNDSAVLTAPVDLQKFKVVAPTDPDRVVTIIGNANPSDKVRIVTPADILAEMSYFLNLAEGIGRVDDIDHLGNRRIRAVGELLANQVRLGLSRMERNVRERMSVQDNEVLTPQQIINIRPVTAAIKEFFGSSQLSQFMDQHNPLSELSHKRRLSALGPGGLTRDRAGYEVRDVHYTHYGRMCPIETPEGPNIGLINNLSSYGHLNKYGFIQTPYRKVDREAGVVTNEIVWLTADEEDEFIVAQANSKLNEKGGFAEPIVMGRHQGNNQEFPSDQVDYMDVSPKQVVAVATACIPFLENDDSNRALMGANMQRQAVPLIDPKAPYVGTGMEYQAAHDSGAAVIAQHDGKVTYADADKVEVRREDGSLDVYQIQKFRRSNSGTAYNQRTLVKVGDVVEKGDFIADGPSMENGEMALGQNPIVAYMTWEGYNFEDAVIMSERLVKDDVYTSVHLEEYESETRDTKLGPEEITREIPNVGEDALRNLDEMGIIRIGAEVKEGDILVGKVTPKGEKDLSAEERLLHAIFGDKSREVRDTSLRVPHGADGVVRDVKIFTRANGDELQSGVNMLVRVYIAQKRKIKVGDKMAGRHGNKGVVSRIVPVEDMPYLPDGTPVDIMLNPLGVPSRMNIGQVMELHLGMAARNLGIHIATPVFDGASSEDLWDTVREAGMDSDAKTILYDGRTGEPFDNRVSVGVMYMIKLHHMVDDKLHARSVGPYSMVTQQPLGGKAQFGGQRFGEMEVWALEAYGASNVLQEILTYKSDDVNGRLKAYEAITKGKPIPKPGVPESFRVLVKELQSLGLDMRVLDEDDNEVELRDLDEGEDDDVIHVDDLEKAREKAAQEAKAAFEAEGKE.

Belongs to the RNA polymerase beta chain family. In terms of assembly, the RNAP catalytic core consists of 2 alpha, 1 beta, 1 beta' and 1 omega subunit. When a sigma factor is associated with the core the holoenzyme is formed, which can initiate transcription.

The enzyme catalyses RNA(n) + a ribonucleoside 5'-triphosphate = RNA(n+1) + diphosphate. Functionally, DNA-dependent RNA polymerase catalyzes the transcription of DNA into RNA using the four ribonucleoside triphosphates as substrates. This is DNA-directed RNA polymerase subunit beta from Streptococcus sanguinis (strain SK36).